Reading from the N-terminus, the 158-residue chain is Ribosome maturation factor RimP (158 aa).

This sequence belongs to the RimP family.

It is found in the cytoplasm. Functionally, required for maturation of 30S ribosomal subunits. The protein is Ribosome maturation factor RimP of Streptococcus suis (strain 05ZYH33).